A 126-amino-acid chain; its full sequence is Ribonuclease P protein component (126 aa).

The protein belongs to the RnpA family. Consists of a catalytic RNA component (M1 or rnpB) and a protein subunit.

The enzyme catalyses Endonucleolytic cleavage of RNA, removing 5'-extranucleotides from tRNA precursor.. Its function is as follows. RNaseP catalyzes the removal of the 5'-leader sequence from pre-tRNA to produce the mature 5'-terminus. It can also cleave other RNA substrates such as 4.5S RNA. The protein component plays an auxiliary but essential role in vivo by binding to the 5'-leader sequence and broadening the substrate specificity of the ribozyme. The chain is Ribonuclease P protein component from Rhodococcus erythropolis (strain PR4 / NBRC 100887).